Consider the following 326-residue polypeptide: PDZ domain-containing protein MAGIX (326 aa).

Residues 1-32 (MDSHAGNTADPRGSRRGVGLQGSGSPRARQLL) are disordered. In terms of domain architecture, PDZ spans 128-212 (SVELVRGPAG…RLCLVLQRPQ (85 aa)). Positions 214–267 (MNGSRSKEVGGGHQKTDRIPDPRGGRMMESRGTISPVHHRPKTRTGPGPSPESV) are disordered. Basic and acidic residues predominate over residues 218–242 (RSKEVGGGHQKTDRIPDPRGGRMME). Ser263 bears the Phosphoserine mark.

The sequence is that of PDZ domain-containing protein MAGIX (Magix) from Rattus norvegicus (Rat).